The following is a 156-amino-acid chain: Small ribosomal subunit protein uS7 (156 aa).

This sequence belongs to the universal ribosomal protein uS7 family. In terms of assembly, part of the 30S ribosomal subunit. Contacts proteins S9 and S11.

In terms of biological role, one of the primary rRNA binding proteins, it binds directly to 16S rRNA where it nucleates assembly of the head domain of the 30S subunit. Is located at the subunit interface close to the decoding center, probably blocks exit of the E-site tRNA. This is Small ribosomal subunit protein uS7 from Dinoroseobacter shibae (strain DSM 16493 / NCIMB 14021 / DFL 12).